The primary structure comprises 395 residues: Renin (395 aa).

Residues 1 to 21 (MLRSWEFVLLISCFLCFSSDA) form the signal peptide. Positions 22-43 (LQRISLKKMPSIRETLQEMGMK) are cleaved as a propeptide — activation peptide. Asn64 is a glycosylation site (N-linked (GlcNAc...) asparagine). Residues 79–392 (YYGEISIGTP…DRQNNRIGFA (314 aa)) enclose the Peptidase A1 domain. Asp97 is a catalytic residue. Cystine bridges form between Cys110–Cys117 and Cys274–Cys278. Residue Asp283 is part of the active site. The cysteines at positions 316 and 351 are disulfide-linked.

This sequence belongs to the peptidase A1 family. In terms of processing, N-glycosylated. As to expression, expressed by the venom gland (at protein level).

It localises to the secreted. The enzyme catalyses Cleavage of Leu-|-Xaa bond in angiotensinogen to generate angiotensin I.. With respect to regulation, inhibited completely by aspartyl protease inhibitor pepstatin A, but not by the serine- or metalloproteinase inhibitors PMSF or EDTA. In terms of biological role, renin is a highly specific endopeptidase, whose only known function is to generate angiotensin I from angiotensinogen in the plasma, initiating a cascade of reactions that produce an elevation of blood pressure and increased sodium retention by the kidney. This protein is also found in snake venom and shown to specifically cleave human and porcine angiotensinogen into angiotensin I. It does not have general protease activity, no cleavage of alpha or beta casein. May be directly responsible for elevation of blood pressure in the victims of envenomation. The polypeptide is Renin (Echis ocellatus (Ocellated saw-scaled viper)).